The following is a 440-amino-acid chain: MSLLPTATISTIAHHNGEVVTLAGWVVHKTEKGKLVFIRLRDGSGVIQCVVFRNNVTEATFAAAQQLTIESSCRITGAVRADARAPGGFELDVNAIEIIQIAPEYPIQPKEHGVEFLMEHRHLWIRSSKQHALLRIRAEIIAAAQEWLNDQGFVRFDTPILTPCAAEGTTNLFATPYFDLGTAYLGQTGQLYVEAGMMSFGKVYCFGPTFRAEKSKTRRHLTEFWMIEPEVAFALHEDNLALQERFVSAIVQRVLERRADDLATLERDTKPLERCVPPFPRITYDEALKLIAERHADVEGCTPLEWGEDLGAPHETLIASLFDRPVFVERFPSAIKAFYMEPDPQRPEVALCADLLAPEGYGEIIGGSQRIHDPALLERRIREYGLNVDDYQWYIDLRRYGSVPHSGFGMGIERATAWIAGTHHIRETIPFPRMLYRMYP.

This sequence belongs to the class-II aminoacyl-tRNA synthetase family. In terms of assembly, homodimer.

Its subcellular location is the cytoplasm. The enzyme catalyses tRNA(Asn) + L-asparagine + ATP = L-asparaginyl-tRNA(Asn) + AMP + diphosphate + H(+). This is Asparagine--tRNA ligase from Roseiflexus sp. (strain RS-1).